A 442-amino-acid polypeptide reads, in one-letter code: Putative toxin YopC (442 aa).

The protein in the C-terminal section; belongs to the MbcT/ParT/Res family. In terms of assembly, forms a complex with cognate antitoxin YopB.

Its function is as follows. May be the toxic component of a type II toxin-antitoxin (TA) system. Neutralized by its cognate antitoxin YopB. The protein is Putative toxin YopC (yopC) of Bacillus subtilis (strain 168).